We begin with the raw amino-acid sequence, 127 residues long: uncharacterized protein (127 aa).

This is an uncharacterized protein from Pasteurella multocida (strain Pm70).